A 346-amino-acid chain; its full sequence is Histidinol-phosphate aminotransferase (346 aa).

Lysine 209 is subject to N6-(pyridoxal phosphate)lysine.

Belongs to the class-II pyridoxal-phosphate-dependent aminotransferase family. Histidinol-phosphate aminotransferase subfamily. As to quaternary structure, homodimer. Pyridoxal 5'-phosphate is required as a cofactor.

The enzyme catalyses L-histidinol phosphate + 2-oxoglutarate = 3-(imidazol-4-yl)-2-oxopropyl phosphate + L-glutamate. It functions in the pathway amino-acid biosynthesis; L-histidine biosynthesis; L-histidine from 5-phospho-alpha-D-ribose 1-diphosphate: step 7/9. The polypeptide is Histidinol-phosphate aminotransferase (Vibrio vulnificus (strain YJ016)).